The primary structure comprises 525 residues: GMP synthase [glutamine-hydrolyzing] (525 aa).

A Glutamine amidotransferase type-1 domain is found at 9 to 207 (RILILDFGSQ…VLTISGCEAL (199 aa)). Catalysis depends on C86, which acts as the Nucleophile. Residues H181 and E183 contribute to the active site. Residues 208 to 400 (WTPAKIVDDA…LGLPYDMVYR (193 aa)) enclose the GMPS ATP-PPase domain. ATP is bound at residue 235–241 (SGGVDSS).

As to quaternary structure, homodimer.

It carries out the reaction XMP + L-glutamine + ATP + H2O = GMP + L-glutamate + AMP + diphosphate + 2 H(+). It functions in the pathway purine metabolism; GMP biosynthesis; GMP from XMP (L-Gln route): step 1/1. Its function is as follows. Catalyzes the synthesis of GMP from XMP. This is GMP synthase [glutamine-hydrolyzing] from Marinobacter nauticus (strain ATCC 700491 / DSM 11845 / VT8) (Marinobacter aquaeolei).